Consider the following 338-residue polypeptide: MAPIKVGINGFGRIGRIVFRNAIEHPEVEIVAVNDPFIETKYAAYMLKYDSTHGIFNGEIKQEGNDLVINGKTVKFYTERDPAAIPWKETGADYVVESTGVFTTTDKAKAHLQGGAKKVIISAPSADAPMYVMVVNEKSYDGSADVISNASCTTNCLAPLAKVINDKFGIVEGLMTTVHSYTATQKTVHGPSAKDWRGGRTAAQNIIPSSTGAAKAVGKVIPELNGKLTDMSMRVPTTNVSVVDLTARIEKGASYDEIKQAIKEAAEGPLKGVLAYTEDDVVSTDMIGNPNSSIFDAKAGISLNNNFVKLVSWYDNEWGYSRRVLDLLAHVAKVDASK.

NAD(+)-binding positions include 13-14 (RI), Asp35, and Arg80. D-glyceraldehyde 3-phosphate is bound by residues 151 to 153 (SCT), Thr182, 211 to 212 (TG), and Arg234. Catalysis depends on Cys152, which acts as the Nucleophile. Asn316 is a binding site for NAD(+).

Belongs to the glyceraldehyde-3-phosphate dehydrogenase family. Homotetramer.

Its subcellular location is the cytoplasm. It carries out the reaction D-glyceraldehyde 3-phosphate + phosphate + NAD(+) = (2R)-3-phospho-glyceroyl phosphate + NADH + H(+). The protein operates within carbohydrate degradation; glycolysis; pyruvate from D-glyceraldehyde 3-phosphate: step 1/5. This chain is Glyceraldehyde-3-phosphate dehydrogenase (GPDA), found in Colletotrichum gloeosporioides (Anthracnose fungus).